A 345-amino-acid chain; its full sequence is Hydroxymethylglutaryl-CoA synthase (345 aa).

(3S)-3-hydroxy-3-methylglutaryl-CoA is bound at residue D28. E80 functions as the Proton donor/acceptor in the catalytic mechanism. The (3S)-3-hydroxy-3-methylglutaryl-CoA site is built by C112 and T153. C112 serves as the catalytic Acyl-thioester intermediate. Position 199 (R199) interacts with CoA. Positions 201 and 234 each coordinate (3S)-3-hydroxy-3-methylglutaryl-CoA. H234 acts as the Proton donor/acceptor in catalysis. K239 provides a ligand contact to CoA. R243, N266, and S296 together coordinate (3S)-3-hydroxy-3-methylglutaryl-CoA.

Belongs to the thiolase-like superfamily. Archaeal HMG-CoA synthase family. Interacts with acetoacetyl-CoA thiolase that catalyzes the precedent step in the pathway and with a DUF35 protein. The acetoacetyl-CoA thiolase/HMG-CoA synthase complex channels the intermediate via a fused CoA-binding site, which allows for efficient coupling of the endergonic thiolase reaction with the exergonic HMGCS reaction.

The enzyme catalyses acetoacetyl-CoA + acetyl-CoA + H2O = (3S)-3-hydroxy-3-methylglutaryl-CoA + CoA + H(+). The protein operates within metabolic intermediate biosynthesis; (R)-mevalonate biosynthesis; (R)-mevalonate from acetyl-CoA: step 2/3. In terms of biological role, catalyzes the condensation of acetyl-CoA with acetoacetyl-CoA to form 3-hydroxy-3-methylglutaryl-CoA (HMG-CoA). Functions in the mevalonate (MVA) pathway leading to isopentenyl diphosphate (IPP), a key precursor for the biosynthesis of isoprenoid compounds that are building blocks of archaeal membrane lipids. This is Hydroxymethylglutaryl-CoA synthase from Methanocaldococcus jannaschii (strain ATCC 43067 / DSM 2661 / JAL-1 / JCM 10045 / NBRC 100440) (Methanococcus jannaschii).